The chain runs to 185 residues: Translocon-associated protein subunit gamma (185 aa).

M1 is modified (N-acetylmethionine). The Lumenal segment spans residues 1-27; the sequence is MAPKGSSKQQSEEDLLLQDFSRNLSAK. Phosphoserine occurs at positions 7 and 11. A helical membrane pass occupies residues 28–48; sequence SSALFFGNAFIVSAIPIWLYW. Residues 49–54 are Cytoplasmic-facing; it reads RIWHMD. The chain crosses the membrane as a helical span at residues 55–76; that stretch reads LIQSAVLYSVMTLVSTYLVAFA. Residues 77–135 lie on the Lumenal side of the membrane; it reads YKNVKFVLKHKVAQKREDAVSKEVTRKLSEADNRKMSRKEKDERILWKKNEVADYEATT. Residue S105 is modified to Phosphoserine. The helical transmembrane segment at 136-157 threads the bilayer; the sequence is FSIFYNNTLFLVVVIVASFFIL. At 158-163 the chain is on the cytoplasmic side; sequence KNFNPT. The chain crosses the membrane as a helical span at residues 164–184; the sequence is VNYILSISASSGLIALLSTGS.

Belongs to the TRAP-gamma family. In terms of assembly, heterotetramer of TRAP-alpha, TRAP-beta, TRAP-delta and TRAP-gamma.

It localises to the endoplasmic reticulum membrane. In terms of biological role, TRAP proteins are part of a complex whose function is to bind calcium to the ER membrane and thereby regulate the retention of ER resident proteins. This Homo sapiens (Human) protein is Translocon-associated protein subunit gamma (SSR3).